A 438-amino-acid chain; its full sequence is Gamma-glutamyl phosphate reductase (438 aa).

Belongs to the gamma-glutamyl phosphate reductase family.

It is found in the cytoplasm. The enzyme catalyses L-glutamate 5-semialdehyde + phosphate + NADP(+) = L-glutamyl 5-phosphate + NADPH + H(+). It functions in the pathway amino-acid biosynthesis; L-proline biosynthesis; L-glutamate 5-semialdehyde from L-glutamate: step 2/2. In terms of biological role, catalyzes the NADPH-dependent reduction of L-glutamate 5-phosphate into L-glutamate 5-semialdehyde and phosphate. The product spontaneously undergoes cyclization to form 1-pyrroline-5-carboxylate. The chain is Gamma-glutamyl phosphate reductase from Prochlorococcus marinus (strain NATL1A).